We begin with the raw amino-acid sequence, 214 residues long: Peroxiredoxin 2 (214 aa).

The Thioredoxin domain maps to 1 to 157 (MKLYQKFPET…LLRITKAMIV (157 aa)). The active-site Cysteine sulfenic acid (-SOH) intermediate is cysteine 45. Arginine 120 contributes to the substrate binding site.

The protein belongs to the peroxiredoxin family. Prx6 subfamily. Homodecamer. Pentamer of dimers that assemble into a ring structure.

It localises to the cytoplasm. It carries out the reaction a hydroperoxide + [thioredoxin]-dithiol = an alcohol + [thioredoxin]-disulfide + H2O. Its function is as follows. Thiol-specific peroxidase that catalyzes the reduction of hydrogen peroxide and organic hydroperoxides to water and alcohols, respectively. Plays a role in cell protection against oxidative stress by detoxifying peroxides. In Sulfuracidifex metallicus (Sulfolobus metallicus), this protein is Peroxiredoxin 2.